The chain runs to 925 residues: GPI ethanolamine phosphate transferase 1 (925 aa).

Topologically, residues 1–6 are cytoplasmic; it reads MWNKHR. A helical membrane pass occupies residues 7-27; sequence LAFILVGLLFHLFYLRSIFDI. Residues 28 to 457 are Lumenal-facing; it reads YFVSPLVHGM…TTYNWRFIRS (430 aa). 6 N-linked (GlcNAc...) asparagine glycosylation sites follow: Asn-90, Asn-138, Asn-198, Asn-286, Asn-312, and Asn-358. Residues 458-478 form a helical membrane-spanning segment; it reads IVTLGFIGWITYSFTIFLRLF. Residues 479 to 492 lie on the Cytoplasmic side of the membrane; the sequence is ILEKQYAMKTSPQN. A helical membrane pass occupies residues 493–510; it reads LASFGALTAALNYVLYYQ. The Lumenal segment spans residues 511 to 516; the sequence is RSPFNY. A helical membrane pass occupies residues 517 to 537; that stretch reads YMYLLFPLFFWSQILTNSTIL. Residues 538–547 lie on the Cytoplasmic side of the membrane; it reads HDGIREMFKG. Residues 548 to 568 traverse the membrane as a helical segment; sequence VSMLQRIGICALIVSIYEGIV. Residues 569–574 are Lumenal-facing; it reads YGYFDR. The chain crosses the membrane as a helical span at residues 575 to 595; sequence WIFTIIFNLLALYPFFCGIKD. Topologically, residues 596 to 599 are cytoplasmic; it reads AKTN. The helical transmembrane segment at 600-620 threads the bilayer; it reads MFWGANSMALSIFTLFDAVKI. A topological domain (lumenal) is located at residue Glu-621. A helical transmembrane segment spans residues 622–642; sequence SLTQINVSGLLLVASGLYALW. The Cytoplasmic portion of the chain corresponds to 643–653; that stretch reads RVSKKINSHTK. The helical transmembrane segment at 654–674 threads the bilayer; it reads IVILLQILLLAMMLAVTNKSV. The Lumenal segment spans residues 675-687; it reads TSLQQRAGLPTDA. A helical transmembrane segment spans residues 688 to 708; the sequence is KIAGWVILTLSLSLMPLLHYL. Residues 709–719 lie on the Cytoplasmic side of the membrane; the sequence is KPSNDYQVRVL. Residues 720–740 form a helical membrane-spanning segment; it reads VIYLTFAPTFLILTISFESFF. Residues 741 to 775 lie on the Lumenal side of the membrane; that stretch reads YLLFTNYLMLWIEIESKIKAQNIAKNSQNWLQLLR. A helical transmembrane segment spans residues 776–796; the sequence is ISIIGFFLLQFAFFGTGNVAS. The Cytoplasmic segment spans residues 797–818; the sequence is ISSFSLDSVYRLMPVFDPFPMG. The helical transmembrane segment at 819-839 threads the bilayer; the sequence is ALLILKIMIPYILLSTALGIM. The Lumenal segment spans residues 840 to 848; the sequence is NLKLNIKDY. A helical transmembrane segment spans residues 849 to 869; sequence TVSSLILSTSDVLSLNFFYLL. Topologically, residues 870-885 are cytoplasmic; sequence RTEGSWLDIGVTISNY. A helical transmembrane segment spans residues 886–906; sequence CLAILSSLFMIVLELFSHFLL. The Lumenal portion of the chain corresponds to 907–925; sequence KNVRDNGMDIAASKQQKRH.

The protein belongs to the PIGG/PIGN/PIGO family. PIGN subfamily.

The protein resides in the endoplasmic reticulum membrane. Its pathway is glycolipid biosynthesis; glycosylphosphatidylinositol-anchor biosynthesis. Functionally, ethanolamine phosphate transferase involved in glycosylphosphatidylinositol-anchor biosynthesis. Transfers ethanolamine phosphate to the first alpha-1,4-linked mannose of the glycosylphosphatidylinositol precursor of GPI-anchor. This Eremothecium gossypii (strain ATCC 10895 / CBS 109.51 / FGSC 9923 / NRRL Y-1056) (Yeast) protein is GPI ethanolamine phosphate transferase 1 (MCD4).